A 366-amino-acid chain; its full sequence is Peptide chain release factor 2 (366 aa).

Gln253 is modified (N5-methylglutamine).

Belongs to the prokaryotic/mitochondrial release factor family. Post-translationally, methylated by PrmC. Methylation increases the termination efficiency of RF2.

It localises to the cytoplasm. Peptide chain release factor 2 directs the termination of translation in response to the peptide chain termination codons UGA and UAA. The protein is Peptide chain release factor 2 (prfB) of Buchnera aphidicola subsp. Baizongia pistaciae (strain Bp).